The chain runs to 388 residues: Alcohol dehydrogenase patD (388 aa).

Residue cysteine 46 coordinates Zn(2+). Histidine 47 is a binding site for NAD(+). Zn(2+) contacts are provided by histidine 67, glutamate 68, cysteine 101, cysteine 104, and cysteine 112. Histidine 67 contributes to the substrate binding site. NAD(+) contacts are provided by residues 198–203 (VALSRG), 295–297 (SLL), and 320–322 (EEA).

This sequence belongs to the zinc-containing alcohol dehydrogenase family. Zn(2+) is required as a cofactor.

Its subcellular location is the cytoplasm. The protein localises to the cytosol. The catalysed reaction is neopatulin + NADPH + H(+) = (E)-ascladiol + NADP(+). It participates in mycotoxin biosynthesis; patulin biosynthesis. Alcohol dehydrogenase; part of the gene cluster that mediates the biosynthesis of patulin, an acetate-derived tetraketide mycotoxin produced by several fungal species that shows antimicrobial properties against several bacteria. PatD catalyzes the conversion of neopatulin into E-ascladiol. The pathway begins with the synthesis of 6-methylsalicylic acid by the polyketide synthase (PKS) patK via condensation of acetate and malonate units. The 6-methylsalicylic acid decarboxylase patG then catalyzes the decarboxylation of 6-methylsalicylic acid to yield m-cresol (also known as 3-methylphenol). These first reactions occur in the cytosol. The intermediate m-cresol is then transported into the endoplasmic reticulum where the cytochrome P450 monooxygenase patH converts it to m-hydroxybenzyl alcohol, which is further converted to gentisyl alcohol by the cytochrome P450 monooxygenase patI. The oxidoreductases patJ and patO further convert gentisyl alcohol to isoepoxydon in the vacuole. PatN catalyzes then the transformation of isoepoxydon into phyllostine. The cluster protein patF is responsible for the conversion from phyllostine to neopatulin whereas the alcohol dehydrogenase patD converts neopatulin to E-ascladiol. The steps between isoepoxydon and E-ascladiol occur in the cytosol, and E-ascladiol is probably secreted to the extracellular space by one of the cluster-specific transporters patC or patM. Finally, the secreted patulin synthase patE catalyzes the conversion of E-ascladiol to patulin. The protein is Alcohol dehydrogenase patD of Aspergillus clavatus (strain ATCC 1007 / CBS 513.65 / DSM 816 / NCTC 3887 / NRRL 1 / QM 1276 / 107).